The primary structure comprises 224 residues: Transcription cofactor HES-6 (224 aa).

A disordered region spans residues 1-31 (MAPSQAPSRDRAGQEDEDRWEARGDRKARKP). Over residues 8 to 25 (SRDRAGQEDEDRWEARGD) the composition is skewed to basic and acidic residues. The region spanning 25–77 (DRKARKPLVEKKRRARINESLQELRLLLAGTEVQAKLENAEVLELTVRRVQGA) is the bHLH domain. Positions 96–129 (FAAGYIQCMHEVHTFVSTCQAIDATVSAELLNHL) constitute an Orange domain. The tract at residues 146–209 (GDSLAGLPGG…GPDLVSTSLG (64 aa)) is disordered. Over residues 158–171 (RSSWPPGGSPESPL) the composition is skewed to low complexity. The span at 181–190 (LCSDLEEIPE) shows a compositional bias: acidic residues. The WRPW motif motif lies at 221-224 (WRPW).

As to quaternary structure, transcription repression requires formation of a complex with a corepressor protein of the Groucho/TLE family. Interacts with HES1. Expressed in both undifferentiated and differentiated cells. High levels of expression are observed in several embryonic tissues including the nervous system, muscle and thymus. In the nervous system, initially expressed in the closing neural tube, then in the spinal cord, cranial and dorsal root ganglia, and brain neuroepithelium. Also expressed in epithelial cells of the embryonic respiratory, urinary and digestive systems. In the limb buds, expressed in skeletal muscle and presumptive tendons.

The protein localises to the nucleus. In terms of biological role, does not bind DNA itself but suppresses both HES1-mediated N box-dependent transcriptional repression and binding of HES1 to E box sequences. Also suppresses HES1-mediated inhibition of the heterodimer formed by ASCL1/MASH1 and TCF3/E47, allowing ASCL1 and TCF3 to up-regulate transcription in its presence. Promotes cell differentiation. The sequence is that of Transcription cofactor HES-6 from Mus musculus (Mouse).